We begin with the raw amino-acid sequence, 433 residues long: 3-deoxy-D-manno-octulosonic acid transferase (433 aa).

A helical; Signal-anchor transmembrane segment spans residues 11 to 31 (TFLYDCFLIFAFMVGLPRILY). Glu70 (proton acceptor) is an active-site residue. CMP is bound by residues 277–278 (PR), 317–319 (IGW), and 344–347 (NLLE).

The protein belongs to the glycosyltransferase group 1 family. Glycosyltransferase 30 subfamily.

The protein resides in the cell inner membrane. It carries out the reaction lipid IVA (E. coli) + CMP-3-deoxy-beta-D-manno-octulosonate = alpha-Kdo-(2-&gt;6)-lipid IVA (E. coli) + CMP + H(+). It catalyses the reaction alpha-Kdo-(2-&gt;6)-lipid IVA (E. coli) + CMP-3-deoxy-beta-D-manno-octulosonate = alpha-Kdo-(2-&gt;4)-alpha-Kdo-(2-&gt;6)-lipid IVA (E. coli) + CMP + H(+). The catalysed reaction is alpha-Kdo-(2-&gt;4)-alpha-Kdo-(2-&gt;6)-lipid IVA (E. coli) + CMP-3-deoxy-beta-D-manno-octulosonate = alpha-Kdo-(2-&gt;8)-alpha-Kdo-(2-&gt;4)-alpha-Kdo-(2-&gt;6)-lipid IVA (E. coli) + CMP + H(+). The enzyme catalyses alpha-Kdo-(2-&gt;8)-alpha-Kdo-(2-&gt;4)-alpha-Kdo-(2-&gt;6)-lipid IVA (E. coli) + CMP-3-deoxy-beta-D-manno-octulosonate = alpha-Kdo-(2-&gt;8)-[alpha-Kdo-(2-&gt;4)]-alpha-Kdo-(2-&gt;4)-alpha-Kdo-(2-&gt;6)-lipid IVA + CMP + H(+). Its pathway is bacterial outer membrane biogenesis; LPS core biosynthesis. Its function is as follows. Involved in lipopolysaccharide (LPS) biosynthesis. Catalyzes the transfer of predominantly four 3-deoxy-D-manno-octulosonate (Kdo) residues from CMP-Kdo to lipid IV(A), the tetraacyldisaccharide-1,4'-bisphosphate precursor of lipid A. Thus generates the genus-specific LPS epitope of Chlamydia, composed of the trisaccharide alpha-Kdo-(2-&gt;8)-alpha-Kdo-(2-&gt;4)-alpha-Kdo. The sequence is that of 3-deoxy-D-manno-octulosonic acid transferase (waaA) from Chlamydophila psittaci (strain ATCC VR-125 / 6BC) (Chlamydia psittaci).